The following is a 189-amino-acid chain: MRVPKKERQTELQHTIEQNPFITDEALATHFNVSIQTIRLDRMEMKIPELRERIKHVATERLDDVRTLTENEVIGDMIDLKLDTSAISILEILPEHAFSRNAIARGHILFAQANSLAIALIDDELALTTKANVQFTRSVHVGERVVAKAFVSSHRQDGRSDINVESFVGDECVFIGEFTVYRSSKEESK.

This sequence belongs to the FapR family.

Transcriptional factor involved in regulation of membrane lipid biosynthesis by repressing genes involved in fatty acid and phospholipid metabolism. The chain is Transcription factor FapR from Exiguobacterium sibiricum (strain DSM 17290 / CCUG 55495 / CIP 109462 / JCM 13490 / 255-15).